Reading from the N-terminus, the 248-residue chain is Probable transcriptional regulatory protein Dde_2325 (248 aa).

Basic residues predominate over residues 1–15; the sequence is MAGHSKWKNIQHRKG. The disordered stretch occupies residues 1-22; that stretch reads MAGHSKWKNIQHRKGRQDAKKS.

It belongs to the TACO1 family.

It is found in the cytoplasm. The polypeptide is Probable transcriptional regulatory protein Dde_2325 (Oleidesulfovibrio alaskensis (strain ATCC BAA-1058 / DSM 17464 / G20) (Desulfovibrio alaskensis)).